Here is a 426-residue protein sequence, read N- to C-terminus: Glutamate-1-semialdehyde 2,1-aminomutase (426 aa).

Lysine 265 bears the N6-(pyridoxal phosphate)lysine mark.

It belongs to the class-III pyridoxal-phosphate-dependent aminotransferase family. HemL subfamily. Homodimer. The cofactor is pyridoxal 5'-phosphate.

It is found in the cytoplasm. The enzyme catalyses (S)-4-amino-5-oxopentanoate = 5-aminolevulinate. The protein operates within porphyrin-containing compound metabolism; protoporphyrin-IX biosynthesis; 5-aminolevulinate from L-glutamyl-tRNA(Glu): step 2/2. The sequence is that of Glutamate-1-semialdehyde 2,1-aminomutase from Escherichia coli O139:H28 (strain E24377A / ETEC).